A 400-amino-acid chain; its full sequence is Probable peptidoglycan D,D-transpeptidase PenA (400 aa).

A disordered region spans residues 1-21 (NIDGKGQEGLELSREDSLRGE). Ser-128 acts as the Acyl-ester intermediate in catalysis.

This sequence belongs to the transpeptidase family. FtsI subfamily.

The protein resides in the cell inner membrane. The catalysed reaction is Preferential cleavage: (Ac)2-L-Lys-D-Ala-|-D-Ala. Also transpeptidation of peptidyl-alanyl moieties that are N-acyl substituents of D-alanine.. Its pathway is cell wall biogenesis; peptidoglycan biosynthesis. Functionally, catalyzes cross-linking of the peptidoglycan cell wall at the division septum. The polypeptide is Probable peptidoglycan D,D-transpeptidase PenA (Neisseria flavescens).